A 425-amino-acid polypeptide reads, in one-letter code: Enolase (425 aa).

Residue Q162 participates in (2R)-2-phosphoglycerate binding. E204 acts as the Proton donor in catalysis. The Mg(2+) site is built by D241, E284, and D311. 4 residues coordinate (2R)-2-phosphoglycerate: K336, R365, S366, and K387. K336 acts as the Proton acceptor in catalysis.

This sequence belongs to the enolase family. Mg(2+) is required as a cofactor.

The protein localises to the cytoplasm. It is found in the secreted. Its subcellular location is the cell surface. The catalysed reaction is (2R)-2-phosphoglycerate = phosphoenolpyruvate + H2O. It participates in carbohydrate degradation; glycolysis; pyruvate from D-glyceraldehyde 3-phosphate: step 4/5. Its function is as follows. Catalyzes the reversible conversion of 2-phosphoglycerate (2-PG) into phosphoenolpyruvate (PEP). It is essential for the degradation of carbohydrates via glycolysis. The chain is Enolase from Brucella melitensis biotype 2 (strain ATCC 23457).